Reading from the N-terminus, the 269-residue chain is HTH-type transcriptional activator ArnR1 (269 aa).

The Cytoplasmic segment spans residues 1–217; the sequence is MSSMNKRVFD…LLKLTGSYRY (217 aa). The H-T-H motif DNA-binding region spans 42-65; that stretch reads TTEISQTINTSRKSIIDAIRKLVD. A helical membrane pass occupies residues 218-238; that stretch reads EIALTKVMLFNVISIPVLMYL. The Extracellular portion of the chain corresponds to 239–241; sequence KDQ. Residues 242–262 traverse the membrane as a helical segment; sequence LGILEAIWLYVIILLPLLSIF. Residues 263–269 lie on the Cytoplasmic side of the membrane; it reads AEIFNRI.

It is found in the cell membrane. Its function is as follows. Involved in regulation of archaellar gene expression. May activate flaB transcription upon nutrient starvation by acting on the flaB promoter. This chain is HTH-type transcriptional activator ArnR1, found in Sulfolobus acidocaldarius (strain ATCC 33909 / DSM 639 / JCM 8929 / NBRC 15157 / NCIMB 11770).